A 453-amino-acid chain; its full sequence is MGLPIVAIIGRPNVGKSTLVNRLAGEQTAIVHDEPGVTRDRTYLPAYWSDREFQVVDTGGLVFNDDTEFLPLIRQQALAALHEASAAIFVVNGQTGPNSADEEIAEWLRQQPVPVFLAVNKCESPDQGSIQASEFWELGLGEPYPISAIHGNGTGELLDELIKHLPPVTELEENNEIKIAIIGRPNVGKSSLLNAFAGEERVIVSPISGTTRDAIDTFIERDGQNYRLIDTAGIRKKKSIDYGTEFFSINRAFKAIRRADVVLLVIDALDGVTEQDQKLAGRILDEGKACVVVVNKWDAVEKDSYTIYDYEKNLEARLHFTEWADTIYVSAVTGQRVEKILELVTKANEEHKRRVSTSVINEVLEDAVRWHSPPTSRGGRQGRIYYGTQVSTQPPTIALFVNEAKRFNDNYRRYIERQFRQQLGFKGTPIRLLWRSKKVRDVESGSANRATRV.

EngA-type G domains are found at residues 4–169 and 177–352; these read PIVA…PPVT and IKIA…EEHK. Residues 10–17, 57–61, 120–123, 183–190, 230–234, and 295–298 contribute to the GTP site; these read GRPNVGKS, DTGGL, NKCE, DTAGI, and NKWD. The region spanning 353–438 is the KH-like domain; that stretch reads RRVSTSVINE…PIRLLWRSKK (86 aa).

This sequence belongs to the TRAFAC class TrmE-Era-EngA-EngB-Septin-like GTPase superfamily. EngA (Der) GTPase family. As to quaternary structure, associates with the 50S ribosomal subunit.

Its function is as follows. GTPase that plays an essential role in the late steps of ribosome biogenesis. This Nostoc sp. (strain PCC 7120 / SAG 25.82 / UTEX 2576) protein is GTPase Der.